We begin with the raw amino-acid sequence, 99 residues long: Large ribosomal subunit protein bL28 (99 aa).

Residues 1 to 25 (MSRKCAVTGKGVQTGNNVSHANNKS) are disordered. Residues 11 to 22 (GVQTGNNVSHAN) are compositionally biased toward polar residues.

It belongs to the bacterial ribosomal protein bL28 family.

In Rhodospirillum centenum (strain ATCC 51521 / SW), this protein is Large ribosomal subunit protein bL28.